Here is a 356-residue protein sequence, read N- to C-terminus: Glycerol-1-phosphate dehydrogenase [NAD(P)+] (356 aa).

NAD(+)-binding positions include 103–107 and 125–128; these read GRSID and TAAS. Asp-130 is a binding site for substrate. Position 134 (Ser-134) interacts with NAD(+). Asp-177 provides a ligand contact to substrate. 2 residues coordinate Zn(2+): Asp-177 and His-257. Residue His-261 coordinates substrate. His-273 contacts Zn(2+).

This sequence belongs to the glycerol-1-phosphate dehydrogenase family. It depends on Zn(2+) as a cofactor.

It is found in the cytoplasm. The catalysed reaction is sn-glycerol 1-phosphate + NAD(+) = dihydroxyacetone phosphate + NADH + H(+). The enzyme catalyses sn-glycerol 1-phosphate + NADP(+) = dihydroxyacetone phosphate + NADPH + H(+). It participates in membrane lipid metabolism; glycerophospholipid metabolism. In terms of biological role, catalyzes the NAD(P)H-dependent reduction of dihydroxyacetonephosphate (DHAP or glycerone phosphate) to glycerol 1-phosphate (G1P). The G1P thus generated is used as the glycerophosphate backbone of phospholipids in the cellular membranes of Archaea. The polypeptide is Glycerol-1-phosphate dehydrogenase [NAD(P)+] (Methanosarcina mazei (strain ATCC BAA-159 / DSM 3647 / Goe1 / Go1 / JCM 11833 / OCM 88) (Methanosarcina frisia)).